Here is a 1587-residue protein sequence, read N- to C-terminus: Sister chromatid cohesion protein mis4 (1587 aa).

Positions 140-172 (PKEKPDASSINTNRSSSDNGFLTPSSSPRSPSC) are disordered. Polar residues predominate over residues 147-162 (SSINTNRSSSDNGFLT). Residues 163–172 (PSSSPRSPSC) show a composition bias toward low complexity. S183 carries the phosphoserine modification. HEAT repeat units lie at residues 775 to 812 (LNLKFFVSLIIGFLDSPQASLRTKCLRIINQMKTIPSI), 814 to 851 (RTHPEVLAQIISKSNDQSAIVRDTVLDLLGTYIMAYRE), 853 to 888 (IPQIYGCIISGISDPSTIVRKRAIKQLCEVYEATED), 890 to 927 (NIRVDIASKLLTRSNDEEETISELSLEVLEKLWFSPAS), 1101 to 1140 (ATLMEIVPCLCSLFTRLNDYERLKKIVVSCLKSLEEARHS), and 1183 to 1220 (DAYVILLGYFQKLLKDAKGQLRIHIIDNMSRICLRETS).

Belongs to the SCC2/Nipped-B family. In terms of assembly, interacts with ssl3.

It localises to the nucleus. The protein resides in the chromosome. Plays a structural role in chromatin. Chromatid cohesion molecule required for equal sister chromatid separation in anaphase. May form a stable link between chromatids in S phase that is split rather than removed in anaphase. Also required for spindle-kinetochore interaction in early mitosis and inhibit sister chromatid separation until the cleavage of Rad21 in anaphase. The polypeptide is Sister chromatid cohesion protein mis4 (mis4) (Schizosaccharomyces pombe (strain 972 / ATCC 24843) (Fission yeast)).